The primary structure comprises 357 residues: Protein RecA (357 aa).

ATP is bound at residue 73–80 (GPESSGKT).

The protein belongs to the RecA family.

It localises to the cytoplasm. Can catalyze the hydrolysis of ATP in the presence of single-stranded DNA, the ATP-dependent uptake of single-stranded DNA by duplex DNA, and the ATP-dependent hybridization of homologous single-stranded DNAs. It interacts with LexA causing its activation and leading to its autocatalytic cleavage. The chain is Protein RecA from Nitratidesulfovibrio vulgaris (strain ATCC 29579 / DSM 644 / CCUG 34227 / NCIMB 8303 / VKM B-1760 / Hildenborough) (Desulfovibrio vulgaris).